Consider the following 515-residue polypeptide: ATP-dependent RNA helicase DBP3 (515 aa).

The segment at 1 to 67 is disordered; it reads MAKRPLQTEA…SDSRYLPTPE (67 aa). The Q motif signature appears at 100 to 127; the sequence is TSFSFLPESSNDLYLPLEKFSSPTPIQA. The region spanning 130–306 is the Helicase ATP-binding domain; sequence WPLAFAGRDL…ASFTKNPVTV (177 aa). An ATP-binding site is contributed by 143–150; it reads AETGSGKT. The DEAD box signature appears at 252–255; it reads DEAD. The region spanning 335 to 484 is the Helicase C-terminal domain; it reads RLLELLRRYQ…DVPESLLKFG (150 aa).

Belongs to the DEAD box helicase family. DDX5/DBP2 subfamily.

Its subcellular location is the nucleus. It is found in the nucleolus. It carries out the reaction ATP + H2O = ADP + phosphate + H(+). Functionally, ATP-dependent RNA helicase required for 60S ribosomal subunit synthesis. Involved in efficient pre-rRNA processing, predominantly at site A3, which is necessary for the normal formation of 25S and 5.8S rRNAs. In Coccidioides immitis (strain RS) (Valley fever fungus), this protein is ATP-dependent RNA helicase DBP3 (DBP3).